A 198-amino-acid polypeptide reads, in one-letter code: Putative undecaprenyl-diphosphatase YbjG (198 aa).

At Met1–Ala27 the chain is on the cytoplasmic side. Residues Ile28–Trp48 traverse the membrane as a helical segment. Residues Gly49–Val57 are Periplasmic-facing. Residues Ile58 to Phe78 form a helical membrane-spanning segment. Topologically, residues Pro79–His120 are cytoplasmic. The helical transmembrane segment at Arg121–Gly143 threads the bilayer. Residues Val144 to Asp149 are Periplasmic-facing. The helical transmembrane segment at Met150–Gly172 threads the bilayer. Topologically, residues His173–Asp198 are cytoplasmic.

This sequence belongs to the BcrC/YbjG family.

The protein localises to the cell inner membrane. The catalysed reaction is di-trans,octa-cis-undecaprenyl diphosphate + H2O = di-trans,octa-cis-undecaprenyl phosphate + phosphate + H(+). Its function is as follows. Overexpression leads to increased undecaprenyl diphosphatase activity and to increased resistance to bacitracin. May have a preferred substrate other than undecaprenyl diphosphate in vivo. This is Putative undecaprenyl-diphosphatase YbjG (ybjG) from Escherichia coli (strain K12).